The sequence spans 1070 residues: Inactive tyrosine-protein kinase 7 (1070 aa).

An N-terminal signal peptide occupies residues Met-1–Thr-30. 7 consecutive Ig-like C2-type domains span residues Ala-31–Asn-120, Pro-128–Ser-218, Ala-225–Leu-317, Pro-309–Thr-407, Pro-412–Gln-497, Lys-503–Leu-586, and Gly-578–Tyr-680. At Ala-31 to Thr-704 the chain is on the extracellular side. A disulfide bond links Cys-53 and Cys-101. Residues Asn-116, Asn-175, Asn-184, Asn-214, Asn-268, and Asn-283 are each glycosylated (N-linked (GlcNAc...) asparagine). An intrachain disulfide couples Cys-150 to Cys-200. Disulfide bonds link Cys-246-Cys-301 and Cys-343-Cys-391. N-linked (GlcNAc...) asparagine glycans are attached at residues Asn-405, Asn-463, Asn-567, and Asn-646. 3 disulfide bridges follow: Cys-433–Cys-481, Cys-524–Cys-570, and Cys-613–Cys-664. The chain crosses the membrane as a helical span at residues Ile-705–Tyr-725. At Cys-726–Pro-1070 the chain is on the cytoplasmic side. Disordered regions lie at residues Gln-736–Pro-759 and Gly-773–Arg-793. The segment at Ser-794–Pro-1070 is interaction with CTNNB1. The Protein kinase; inactive domain occupies Leu-796–Val-1066. Ser-1064 is subject to Phosphoserine.

The protein belongs to the protein kinase superfamily. Tyr protein kinase family. Insulin receptor subfamily. Interacts with CTNNB1. In terms of processing, MMP14 cleaves PTK7 between Pro-621 and Leu-622 generating an N-terminal soluble (70 kDa) fragment and a membrane C-terminal (50 kDa) fragment. Proteolysis by MMP14 regulates PTK7 function in non-canonical Wnt signaling pathway. In terms of tissue distribution, highly expressed in lung, liver, pancreas, kidney, placenta and melanocytes. Weakly expressed in thyroid gland, ovary, brain, heart and skeletal muscle. Also expressed in erythroleukemia cells. But not expressed in colon.

It is found in the membrane. The protein resides in the cell junction. Functionally, inactive tyrosine kinase involved in Wnt signaling pathway. Component of both the non-canonical (also known as the Wnt/planar cell polarity signaling) and the canonical Wnt signaling pathway. Functions in cell adhesion, cell migration, cell polarity, proliferation, actin cytoskeleton reorganization and apoptosis. Has a role in embryogenesis, epithelial tissue organization and angiogenesis. The protein is Inactive tyrosine-protein kinase 7 (PTK7) of Homo sapiens (Human).